We begin with the raw amino-acid sequence, 335 residues long: Ferrochelatase (335 aa).

Fe cation is bound by residues histidine 194 and glutamate 275.

Belongs to the ferrochelatase family.

The protein resides in the cytoplasm. The catalysed reaction is heme b + 2 H(+) = protoporphyrin IX + Fe(2+). It participates in porphyrin-containing compound metabolism; protoheme biosynthesis; protoheme from protoporphyrin-IX: step 1/1. In terms of biological role, catalyzes the ferrous insertion into protoporphyrin IX. The polypeptide is Ferrochelatase (Sodalis glossinidius (strain morsitans)).